The primary structure comprises 719 residues: Fatty acid oxidation complex subunit alpha (719 aa).

The segment at 1-190 is enoyl-CoA hydratase/isomerase; sequence MVYQGNRITV…KLGLVDATVA (190 aa). Asp-298 contributes to the substrate binding site. Residues 313–719 are 3-hydroxyacyl-CoA dehydrogenase; that stretch reads HDINEAAVLG…AAGETFYATA (407 aa). Residues Met-326, Asp-345, 402–404, Lys-409, and Ser-431 contribute to the NAD(+) site; that span reads VVE. Catalysis depends on His-452, which acts as the For 3-hydroxyacyl-CoA dehydrogenase activity. Residue Asn-455 coordinates NAD(+). A substrate-binding site is contributed by Asn-502.

The protein in the N-terminal section; belongs to the enoyl-CoA hydratase/isomerase family. This sequence in the C-terminal section; belongs to the 3-hydroxyacyl-CoA dehydrogenase family. Heterotetramer of two alpha chains (FadB) and two beta chains (FadA).

The enzyme catalyses a (3S)-3-hydroxyacyl-CoA + NAD(+) = a 3-oxoacyl-CoA + NADH + H(+). The catalysed reaction is a (3S)-3-hydroxyacyl-CoA = a (2E)-enoyl-CoA + H2O. It catalyses the reaction a 4-saturated-(3S)-3-hydroxyacyl-CoA = a (3E)-enoyl-CoA + H2O. It carries out the reaction (3S)-3-hydroxybutanoyl-CoA = (3R)-3-hydroxybutanoyl-CoA. The enzyme catalyses a (3Z)-enoyl-CoA = a 4-saturated (2E)-enoyl-CoA. The catalysed reaction is a (3E)-enoyl-CoA = a 4-saturated (2E)-enoyl-CoA. Its pathway is lipid metabolism; fatty acid beta-oxidation. In terms of biological role, involved in the aerobic and anaerobic degradation of long-chain fatty acids via beta-oxidation cycle. Catalyzes the formation of 3-oxoacyl-CoA from enoyl-CoA via L-3-hydroxyacyl-CoA. It can also use D-3-hydroxyacyl-CoA and cis-3-enoyl-CoA as substrate. The sequence is that of Fatty acid oxidation complex subunit alpha from Psychrobacter cryohalolentis (strain ATCC BAA-1226 / DSM 17306 / VKM B-2378 / K5).